The sequence spans 390 residues: NADH-quinone oxidoreductase subunit D (390 aa).

It belongs to the complex I 49 kDa subunit family. In terms of assembly, NDH-1 is composed of 14 different subunits. Subunits NuoB, C, D, E, F, and G constitute the peripheral sector of the complex.

It localises to the cell membrane. The catalysed reaction is a quinone + NADH + 5 H(+)(in) = a quinol + NAD(+) + 4 H(+)(out). Its function is as follows. NDH-1 shuttles electrons from NADH, via FMN and iron-sulfur (Fe-S) centers, to quinones in the respiratory chain. The immediate electron acceptor for the enzyme in this species is believed to be ubiquinone. Couples the redox reaction to proton translocation (for every two electrons transferred, four hydrogen ions are translocated across the cytoplasmic membrane), and thus conserves the redox energy in a proton gradient. This is NADH-quinone oxidoreductase subunit D from Wolbachia sp. subsp. Brugia malayi (strain TRS).